A 132-amino-acid polypeptide reads, in one-letter code: Peptide methionine sulfoxide reductase MsrB (132 aa).

Residues 8–130 form the MsrB domain; that stretch reads LDSWREELTE…NSASLKLVPR (123 aa). Zn(2+) is bound by residues cysteine 47, cysteine 50, cysteine 96, and cysteine 99. Catalysis depends on cysteine 119, which acts as the Nucleophile.

It belongs to the MsrB Met sulfoxide reductase family. The cofactor is Zn(2+).

It carries out the reaction L-methionyl-[protein] + [thioredoxin]-disulfide + H2O = L-methionyl-(R)-S-oxide-[protein] + [thioredoxin]-dithiol. In Pseudomonas aeruginosa (strain UCBPP-PA14), this protein is Peptide methionine sulfoxide reductase MsrB.